We begin with the raw amino-acid sequence, 317 residues long: Methionyl-tRNA formyltransferase (317 aa).

(6S)-5,6,7,8-tetrahydrofolate is bound at residue 110–113 (SLLP).

Belongs to the Fmt family.

It carries out the reaction L-methionyl-tRNA(fMet) + (6R)-10-formyltetrahydrofolate = N-formyl-L-methionyl-tRNA(fMet) + (6S)-5,6,7,8-tetrahydrofolate + H(+). Its function is as follows. Attaches a formyl group to the free amino group of methionyl-tRNA(fMet). The formyl group appears to play a dual role in the initiator identity of N-formylmethionyl-tRNA by promoting its recognition by IF2 and preventing the misappropriation of this tRNA by the elongation apparatus. In Bacillus pumilus (strain SAFR-032), this protein is Methionyl-tRNA formyltransferase.